The chain runs to 182 residues: MMNQDSLALIKQSIKTIPDYPIPGIMFRDVTSLLENAEAYKATIAILVAHYQSKGFTKVVGTEARGFLFGAPLALELGVGFVPVRKPGKLPRKTISQTYDLEYGKDTLEIHVDAINANDKVLVIDDLLATGGTIEATVKLIRELGGEVSHAAFVISLPEIGGEKRLQGMGIEVLSLCEFDGE.

It belongs to the purine/pyrimidine phosphoribosyltransferase family. In terms of assembly, homodimer.

The protein localises to the cytoplasm. It carries out the reaction AMP + diphosphate = 5-phospho-alpha-D-ribose 1-diphosphate + adenine. The protein operates within purine metabolism; AMP biosynthesis via salvage pathway; AMP from adenine: step 1/1. Functionally, catalyzes a salvage reaction resulting in the formation of AMP, that is energically less costly than de novo synthesis. The sequence is that of Adenine phosphoribosyltransferase from Shewanella frigidimarina (strain NCIMB 400).